The sequence spans 271 residues: Formamidopyrimidine-DNA glycosylase (271 aa).

Residue proline 2 is the Schiff-base intermediate with DNA of the active site. The active-site Proton donor is the glutamate 3. Residue lysine 58 is the Proton donor; for beta-elimination activity of the active site. DNA is bound by residues histidine 92, arginine 111, and arginine 152. The FPG-type zinc finger occupies 237-271 (MVYGREGQACKHCGRELKHATIGQRATVWCAACQR). The Proton donor; for delta-elimination activity role is filled by arginine 261.

This sequence belongs to the FPG family. Monomer. Requires Zn(2+) as cofactor.

The catalysed reaction is Hydrolysis of DNA containing ring-opened 7-methylguanine residues, releasing 2,6-diamino-4-hydroxy-5-(N-methyl)formamidopyrimidine.. It carries out the reaction 2'-deoxyribonucleotide-(2'-deoxyribose 5'-phosphate)-2'-deoxyribonucleotide-DNA = a 3'-end 2'-deoxyribonucleotide-(2,3-dehydro-2,3-deoxyribose 5'-phosphate)-DNA + a 5'-end 5'-phospho-2'-deoxyribonucleoside-DNA + H(+). Involved in base excision repair of DNA damaged by oxidation or by mutagenic agents. Acts as a DNA glycosylase that recognizes and removes damaged bases. Has a preference for oxidized purines, such as 7,8-dihydro-8-oxoguanine (8-oxoG). Has AP (apurinic/apyrimidinic) lyase activity and introduces nicks in the DNA strand. Cleaves the DNA backbone by beta-delta elimination to generate a single-strand break at the site of the removed base with both 3'- and 5'-phosphates. In Xanthomonas campestris pv. campestris (strain B100), this protein is Formamidopyrimidine-DNA glycosylase.